The primary structure comprises 521 residues: Maturase K (521 aa).

This sequence belongs to the intron maturase 2 family. MatK subfamily.

It localises to the plastid. It is found in the chloroplast. Its function is as follows. Usually encoded in the trnK tRNA gene intron. Probably assists in splicing its own and other chloroplast group II introns. The chain is Maturase K from Kniphofia uvaria (Red-hot poker).